Here is a 195-residue protein sequence, read N- to C-terminus: 3-isopropylmalate dehydratase small subunit (195 aa).

The protein belongs to the LeuD family. LeuD type 1 subfamily. Heterodimer of LeuC and LeuD.

It catalyses the reaction (2R,3S)-3-isopropylmalate = (2S)-2-isopropylmalate. It participates in amino-acid biosynthesis; L-leucine biosynthesis; L-leucine from 3-methyl-2-oxobutanoate: step 2/4. In terms of biological role, catalyzes the isomerization between 2-isopropylmalate and 3-isopropylmalate, via the formation of 2-isopropylmaleate. This Karelsulcia muelleri (strain GWSS) (Sulcia muelleri) protein is 3-isopropylmalate dehydratase small subunit.